The chain runs to 301 residues: Glycine--tRNA ligase alpha subunit (301 aa).

The protein belongs to the class-II aminoacyl-tRNA synthetase family. Tetramer of two alpha and two beta subunits.

The protein localises to the cytoplasm. The catalysed reaction is tRNA(Gly) + glycine + ATP = glycyl-tRNA(Gly) + AMP + diphosphate. The sequence is that of Glycine--tRNA ligase alpha subunit from Variovorax paradoxus (strain S110).